The primary structure comprises 271 residues: MTTLEAFAKARSEGRAALIPYLTAGFPSREGFLQAVEEVLPYADLLEIGLPYSDPLGDGPVIQRASELALRKGMSVQGALELVREVRALTEKPLFLMTYLNPVLAWGPERFFGLFKQAGATGVILPDLPPDEDPGLVRLAQEIGLETVFLLAPTSTDARIATVVRHATGFVYAVSVTGVTGMRERLPEEVKDLVRRIKARTALPVAVGFGVSGKATAAQAAVADGVVVGSALVRALEEGRSLAPLLQEIRQGLQRLEANPGLKESSKKPLS.

Catalysis depends on proton acceptor residues glutamate 47 and aspartate 58.

The protein belongs to the TrpA family. As to quaternary structure, tetramer of two alpha and two beta chains.

The enzyme catalyses (1S,2R)-1-C-(indol-3-yl)glycerol 3-phosphate + L-serine = D-glyceraldehyde 3-phosphate + L-tryptophan + H2O. It participates in amino-acid biosynthesis; L-tryptophan biosynthesis; L-tryptophan from chorismate: step 5/5. Functionally, the alpha subunit is responsible for the aldol cleavage of indoleglycerol phosphate to indole and glyceraldehyde 3-phosphate. The chain is Tryptophan synthase alpha chain from Thermus thermophilus (strain ATCC BAA-163 / DSM 7039 / HB27).